The primary structure comprises 1794 residues: Protein TIC 214 (1794 aa).

Helical transmembrane passes span 23–43, 64–84, 87–107, 124–144, 172–192, and 218–238; these read VVVG…SYLF, FIMG…HLAL, PHTI…WNNH, LSIQ…HFIL, VGWL…LFWI, and ILSI…PSPI. The tract at residues 244 to 307 is disordered; it reads KETSETGETE…REGVNGKEKT (64 aa). Acidic residues predominate over residues 248 to 258; sequence ETGETEEETDV. Composition is skewed to basic and acidic residues over residues 259–276 and 286–307; these read EIER…KEGS and SEEK…KEKT.

Belongs to the TIC214 family. Part of the Tic complex.

It localises to the plastid. The protein localises to the chloroplast inner membrane. Functionally, involved in protein precursor import into chloroplasts. May be part of an intermediate translocation complex acting as a protein-conducting channel at the inner envelope. The protein is Protein TIC 214 of Amborella trichopoda.